Here is a 677-residue protein sequence, read N- to C-terminus: Envelope glycoprotein (677 aa).

The N-terminal stretch at 1–33 is a signal peptide; sequence MGSGYQLLQLPRERFRKTSFLVWVIILFQRAIS. The Extracellular portion of the chain corresponds to 34-651; that stretch reads MPLGIVTNST…DLNLWTGWRQ (618 aa). N-linked (GlcNAc...) asparagine; by host glycosylation occurs at N41. 5 disulfides stabilise this stretch: C54-C610, C109-C136, C122-C148, C512-C557, and C602-C609. Residues 55 to 202 form a receptor-binding region; the sequence is RDKLSSTSQL…HFWKATPAHE (148 aa). 12 N-linked (GlcNAc...) asparagine; by host glycosylation sites follow: N205, N239, N258, N269, N297, N317, N318, N339, N406, N420, N435, and N463. Positions 306–486 are mucin-like region; sequence NLHFQILSTH…PSQPGLTINT (181 aa). Residues 315 to 326 show a composition bias toward polar residues; the sequence is HTNNSSDQSPAG. Disordered stretches follow at residues 315–349, 370–483, and 489–508; these read HTNNSSDQSPAGTVQGKISYHPPTNNSELVPTDSP, NGET…PGLT, and KVADSLSPTRKQKRSVRQNT. Composition is skewed to polar residues over residues 370-421, 428-445, and 458-472; these read NGET…ASNE, MNSIQGSNNSAQSPQTKA, and PQETANISKPGTSPG. A fusion peptide region spans residues 525–540; it reads GAAAGLAWIPYFGPAA. Positions 555–596 form a coiled coil; the sequence is LICGLRQLANETTQALQLFLRATTELRTYSLLNRKAIDFLLQ. N564 is a glycosylation site (N-linked (GlcNAc...) asparagine; by host). Positions 616-635 form a coiled coil; sequence WTKNITDEINQIKHDFIDNP. N-linked (GlcNAc...) asparagine; by host glycosylation is present at N619. The helical transmembrane segment at 652–672 threads the bilayer; sequence WIPAGIGIIGVIIAIIALLCI. S-palmitoyl cysteine; by host attachment occurs at residues C671 and C673. Residues 673–677 lie on the Cytoplasmic side of the membrane; the sequence is CKILC.

It belongs to the filoviruses glycoprotein family. In terms of assembly, homotrimer; each monomer consists of a GP1 and a GP2 subunit linked by disulfide bonds. The resulting peplomers (GP1,2) protrude from the virus surface as spikes. Interacts with host integrin alpha-V/ITGAV. Interacts with host CLEC10A. Binds also to host CD209 and CLEC4M/DC-SIGN(R). Interacts with host FOLR1. Interacts with BST2; this interaction inhibits the antiviral effect of BST2 and this allows viral release from infected cells. Interacts with host FCN1; this interaction enhances viral entry. Interacts with host TLR4; this interaction induces cell death in T-lymphocytes or proinflammatory cytokines and SOCS1 production in monocytes. Interacts with host entry receptor NPC1. As to quaternary structure, GP1 and GP2delta are part of GP1,2delta soluble complexes released by ectodomain shedding. In terms of processing, the signal peptide region modulates GP's high mannose glycosylation, thereby determining the efficiency of the interactions with DC-SIGN(R). N-glycosylated. Post-translationally, O-glycosylated in the mucin-like region. In terms of processing, palmitoylation of GP2 is not required for its function. Specific enzymatic cleavages in vivo yield mature proteins. The precursor is processed into GP1 and GP2 by host cell furin in the trans Golgi, and maybe by other host proteases, to yield the mature GP1 and GP2 proteins. The cleavage site corresponds to the furin optimal cleavage sequence [KR]-X-[KR]-R. This cleavage does not seem to be required for function. After the internalization of the virus into cell endosomes, GP1 C-terminus is removed by the endosomal proteases cathepsin B, cathepsin L, or both, leaving a 19-kDa N-terminal fragment which is further digested by cathepsin B. Proteolytic processing of GP1,2 by host ADAM17 can remove the transmembrane anchor of GP2 and leads to shedding of complexes consisting in GP1 and truncated GP2 (GP1,2delta).

It is found in the virion membrane. The protein resides in the host cell membrane. The protein localises to the secreted. Trimeric GP1,2 complexes form the virion surface spikes and mediate the viral entry processes, with GP1 acting as the receptor-binding subunit and GP2 as the membrane fusion subunit. At later times of infection, down-regulates the expression of various host cell surface molecules that are essential for immune surveillance and cell adhesion. Down-modulates several integrins including ITGA1, ITGA2, ITGA3, ITGA4, ITGA5, ITGA6, ITGAV and ITGB1. This decrease in cell adhesion molecules may lead to cell detachment, contributing to the disruption of blood vessel integrity and hemorrhages developed during infection (cytotoxicity). Interacts with host TLR4 and thereby stimulates the differentiation and activation of monocytes leading to bystander death of T-lymphocytes. Down-regulates as well the function of host natural killer cells. Counteracts the antiviral effect of host BST2/tetherin that restricts release of progeny virions from infected cells. However, cooperates with VP40 and host BST2 to activate canonical NF-kappa-B pathway in a manner dependent on neddylation. Its function is as follows. Functions as a decoy for anti-GP1,2 antibodies thereby contributing to viral immune evasion. Interacts and activates host macrophages and dendritic cells inducing up-regulation of cytokine transcription. This effect is mediated throught activation of host TLR4. Functionally, responsible for binding to the receptor(s) on target cells. Interacts with CD209/DC-SIGN and CLEC4M/DC-SIGNR which act as cofactors for virus entry into dendritic cells (DCs) and endothelial cells. Binding to the macrophage specific lectin CLEC10A also seems to enhance virus infectivity. Interaction with FOLR1/folate receptor alpha may be a cofactor for virus entry in some cell types, although results are contradictory. Members of the Tyro3 receptor tyrosine kinase family also seem to be cell entry factors in filovirus infection. Once attached, the virions are internalized through clathrin-dependent endocytosis and/or macropinocytosis. After internalization of the virus into the endosomes of the host cell, proteolysis of GP1 by two cysteine proteases, CTSB/cathepsin B and CTSL/cathepsin L removes the glycan cap and allows GP1 binding to the host entry receptor NPC1. NPC1-binding, Ca(2+) and acidic pH induce a conformational change of GP2, which unmasks its fusion peptide and permit membranes fusion. In terms of biological role, acts as a class I viral fusion protein. Under the current model, the protein has at least 3 conformational states: pre-fusion native state, pre-hairpin intermediate state, and post-fusion hairpin state. During viral and target cell membrane fusion, the coiled coil regions (heptad repeats) assume a trimer-of-hairpins structure, positioning the fusion peptide in close proximity to the C-terminal region of the ectodomain. The formation of this structure appears to drive apposition and subsequent fusion of viral and target cell membranes. Responsible for penetration of the virus into the cell cytoplasm by mediating the fusion of the membrane of the endocytosed virus particle with the endosomal membrane. Low pH in endosomes induces an irreversible conformational change in GP2, releasing the fusion hydrophobic peptide. This Reston ebolavirus (strain Philippines-96) (REBOV) protein is Envelope glycoprotein (GP).